The primary structure comprises 91 residues: Acyl-CoA-binding domain-containing protein 1 (91 aa).

The ACB domain occupies 3-88 (LQEDFEQYAE…VKQLLEEAAA (86 aa)). Residues lysine 15, 30–34 (YGLYK), lysine 56, and tyrosine 75 contribute to the an acyl-CoA site.

The protein belongs to the ACBP family. In terms of tissue distribution, highly expressed in leaves. Expressed at low levels in roots and seeds.

It is found in the cytoplasm. The protein localises to the cytosol. In terms of biological role, binds medium- and long-chain acyl-CoA esters with high affinity. Can interact in vitro with palmitoyl-CoA, oleoyl-CoA, linoleoyl-CoA and linolenoyl-CoA. Binds phosphatidic acid (PA) and phosphatidylcholine (PC) in vitro. May play a role in the biosynthesis of phospholipids. This Oryza sativa subsp. japonica (Rice) protein is Acyl-CoA-binding domain-containing protein 1.